The following is a 186-amino-acid chain: Akirin-1 (186 aa).

The interval methionine 1–arginine 64 is disordered. Residues proline 22 to cysteine 27 carry the Nuclear localization signal motif. The segment covering glutamine 49 to glycine 60 has biased composition (low complexity). Positions serine 183–serine 186 match the SYVS motif motif.

The protein belongs to the akirin family.

It is found in the nucleus. Functionally, molecular adapter that acts as a bridge between proteins, and which is involved skeletal muscle development. Functions as a signal transducer for MSTN during skeletal muscle regeneration and myogenesis. The protein is Akirin-1 of Xenopus tropicalis (Western clawed frog).